The chain runs to 455 residues: Bifunctional protein GlmU (455 aa).

Residues 1–228 (MYKCALVLAA…FEETIGVNSR (228 aa)) form a pyrophosphorylase region. Residues 8–11 (LAAG), Lys-22, Gln-73, and 78–79 (GT) contribute to the UDP-N-acetyl-alpha-D-glucosamine site. Asp-103 serves as a coordination point for Mg(2+). Gly-140, Glu-154, Asn-169, and Asn-226 together coordinate UDP-N-acetyl-alpha-D-glucosamine. Residue Asn-226 coordinates Mg(2+). Residues 229-249 (AQLAQAEEILKDRINLKHMEN) form a linker region. The interval 250-455 (GVTLIDPKTT…GWVDKKGLKK (206 aa)) is N-acetyltransferase. The UDP-N-acetyl-alpha-D-glucosamine site is built by Arg-331 and Lys-349. His-361 functions as the Proton acceptor in the catalytic mechanism. Residues Tyr-364 and Asn-375 each coordinate UDP-N-acetyl-alpha-D-glucosamine. Acetyl-CoA contacts are provided by residues 384 to 385 (NY), Ala-421, and Arg-438.

This sequence in the N-terminal section; belongs to the N-acetylglucosamine-1-phosphate uridyltransferase family. In the C-terminal section; belongs to the transferase hexapeptide repeat family. Homotrimer. Mg(2+) serves as cofactor.

The protein resides in the cytoplasm. It catalyses the reaction alpha-D-glucosamine 1-phosphate + acetyl-CoA = N-acetyl-alpha-D-glucosamine 1-phosphate + CoA + H(+). The catalysed reaction is N-acetyl-alpha-D-glucosamine 1-phosphate + UTP + H(+) = UDP-N-acetyl-alpha-D-glucosamine + diphosphate. It functions in the pathway nucleotide-sugar biosynthesis; UDP-N-acetyl-alpha-D-glucosamine biosynthesis; N-acetyl-alpha-D-glucosamine 1-phosphate from alpha-D-glucosamine 6-phosphate (route II): step 2/2. Its pathway is nucleotide-sugar biosynthesis; UDP-N-acetyl-alpha-D-glucosamine biosynthesis; UDP-N-acetyl-alpha-D-glucosamine from N-acetyl-alpha-D-glucosamine 1-phosphate: step 1/1. The protein operates within bacterial outer membrane biogenesis; LPS lipid A biosynthesis. Functionally, catalyzes the last two sequential reactions in the de novo biosynthetic pathway for UDP-N-acetylglucosamine (UDP-GlcNAc). The C-terminal domain catalyzes the transfer of acetyl group from acetyl coenzyme A to glucosamine-1-phosphate (GlcN-1-P) to produce N-acetylglucosamine-1-phosphate (GlcNAc-1-P), which is converted into UDP-GlcNAc by the transfer of uridine 5-monophosphate (from uridine 5-triphosphate), a reaction catalyzed by the N-terminal domain. The protein is Bifunctional protein GlmU of Clostridium botulinum (strain Eklund 17B / Type B).